Reading from the N-terminus, the 431-residue chain is Interleukin-11 receptor subunit alpha (431 aa).

The first 23 residues, 1-23, serve as a signal peptide directing secretion; it reads MSSSRSGLTRVLVAVATALVSSS. The Extracellular portion of the chain corresponds to 24–371; it reads TPCPQAWGPP…DPLEQVAVLA (348 aa). Residues 27–110 form the Ig-like C2-type domain; it reads PQAWGPPGVQ…FGGMVTLKLG (84 aa). 3 disulfide bridges follow: cysteine 48/cysteine 94, cysteine 120/cysteine 130, and cysteine 170/cysteine 180. 2 consecutive Fibronectin type-III domains span residues 112-219 and 220-317; these read PPAR…LRPD and PPQG…TPST. N-linked (GlcNAc...) asparagine glycosylation occurs at asparagine 127. Residues 151–170 form a disordered region; it reads KTLPGAESQRESPSTGPWPC. N-linked (GlcNAc...) asparagine glycosylation is present at asparagine 194. Residues 304 to 308 carry the WSXWS motif motif; the sequence is WSAWS. The tract at residues 310-360 is disordered; that stretch reads EAWGTPSTGPLRDEVPDGSRGHEQKLEAAAQEDSPAPPSPSLQPDPRPLDH. Positions 320-335 are enriched in basic and acidic residues; that stretch reads LRDEVPDGSRGHEQKL. Residues 344-355 are compositionally biased toward pro residues; it reads PAPPSPSLQPDP. Residues 372 to 392 form a helical membrane-spanning segment; the sequence is SLGIFSFLGLAVGALALGLWL. The Cytoplasmic segment spans residues 393 to 431; the sequence is RLRRSGKDGPQKPGFLAPMIPGDKLPGIPNLQRTPENFS. A disordered region spans residues 402–431; that stretch reads PQKPGFLAPMIPGDKLPGIPNLQRTPENFS.

The protein belongs to the type I cytokine receptor family. Type 3 subfamily. As to quaternary structure, on IL11 binding, forms a multimer complex with IL6ST/gp130. In terms of processing, a short soluble form is also released from the membrane by proteolysis. The sIL11RA is formed either by limited proteolysis of membrane-bound receptors, a process referred to as ectodomain shedding, or directly secreted from the cells after alternative mRNA splicing. mIL11RA is cleaved by the proteases ADAM10, ELANE and PRTN3.

The protein resides in the membrane. The protein localises to the secreted. In terms of biological role, receptor for interleukin-11 (IL11). The receptor systems for IL6, LIF, OSM, CNTF, IL11 and CT1 can utilize IL6ST for initiating signal transmission. The IL11/IL11RA/IL6ST complex may be involved in the control of proliferation and/or differentiation of skeletogenic progenitor or other mesenchymal cells. Essential for the normal development of craniofacial bones and teeth. Restricts suture fusion and tooth number. Functionally, soluble form of IL11 receptor (sIL11RA) that acts as an agonist of IL11 activity. The IL11:sIL11RA complex binds to IL6ST/gp130 on cell surfaces and induces signaling also on cells that do not express membrane-bound IL11RA in a process called IL11 trans-signaling. The sequence is that of Interleukin-11 receptor subunit alpha from Rattus norvegicus (Rat).